Consider the following 29-residue polypeptide: Scolopendra 8011.73 Da toxin (29 aa).

As to expression, expressed by the venom gland.

The protein resides in the secreted. The sequence is that of Scolopendra 8011.73 Da toxin from Scolopendra viridicornis nigra (Brazilian giant centipede).